Reading from the N-terminus, the 315-residue chain is Putative protein phosphatase 2C 24 (315 aa).

The PPM-type phosphatase domain maps to 71–314; the sequence is ALRMEAASCF…DDITVVVAYI (244 aa). Residues D102, G103, D238, and D305 each contribute to the Mn(2+) site.

The protein belongs to the PP2C family. The cofactor is Mg(2+). Mn(2+) is required as a cofactor.

It carries out the reaction O-phospho-L-seryl-[protein] + H2O = L-seryl-[protein] + phosphate. The enzyme catalyses O-phospho-L-threonyl-[protein] + H2O = L-threonyl-[protein] + phosphate. This Oryza sativa subsp. japonica (Rice) protein is Putative protein phosphatase 2C 24.